Reading from the N-terminus, the 270-residue chain is Phosphonoacetaldehyde hydrolase (270 aa).

The active-site Nucleophile is the D11. Mg(2+)-binding residues include D11 and A13. K53 serves as the catalytic Schiff-base intermediate with substrate. Residue D187 coordinates Mg(2+).

The protein belongs to the HAD-like hydrolase superfamily. PhnX family. Homodimer. It depends on Mg(2+) as a cofactor.

The catalysed reaction is phosphonoacetaldehyde + H2O = acetaldehyde + phosphate + H(+). Its function is as follows. Involved in phosphonate degradation. This Salmonella enteritidis PT4 (strain P125109) protein is Phosphonoacetaldehyde hydrolase.